The chain runs to 121 residues: MIQPQTCLNVADNSGAKKLMCIRVLGTNRRYGHVGDVIIGVVKDATPNLTVKRSDVVRAVIVRTKQSIRRKDGSRLRFDDNATVIINKENNPRGTRVFGPIARELKDNGFTKIVSLAPEVL.

The protein belongs to the universal ribosomal protein uL14 family. Part of the 50S ribosomal subunit.

Its subcellular location is the plastid. It localises to the chloroplast. In terms of biological role, binds to 23S rRNA. This is Large ribosomal subunit protein uL14c from Emiliania huxleyi (Coccolithophore).